We begin with the raw amino-acid sequence, 37 residues long: uncharacterized protein (37 aa).

The helical transmembrane segment at 17 to 37 (TFVLIVVLFILLIIVGAAFIC) threads the bilayer.

The protein belongs to the SscA family.

It localises to the membrane. This is an uncharacterized protein from Bacillus subtilis (strain 168).